Here is a 302-residue protein sequence, read N- to C-terminus: Succinate--CoA ligase [ADP-forming] subunit alpha (302 aa).

CoA is bound by residues 17–20 (TGST), lysine 43, and 96–98 (ITE). Tyrosine 159 contributes to the substrate binding site. Histidine 247 functions as the Tele-phosphohistidine intermediate in the catalytic mechanism.

The protein belongs to the succinate/malate CoA ligase alpha subunit family. As to quaternary structure, heterotetramer of two alpha and two beta subunits.

The catalysed reaction is succinate + ATP + CoA = succinyl-CoA + ADP + phosphate. It carries out the reaction GTP + succinate + CoA = succinyl-CoA + GDP + phosphate. It functions in the pathway carbohydrate metabolism; tricarboxylic acid cycle; succinate from succinyl-CoA (ligase route): step 1/1. Its function is as follows. Succinyl-CoA synthetase functions in the citric acid cycle (TCA), coupling the hydrolysis of succinyl-CoA to the synthesis of either ATP or GTP and thus represents the only step of substrate-level phosphorylation in the TCA. The alpha subunit of the enzyme binds the substrates coenzyme A and phosphate, while succinate binding and nucleotide specificity is provided by the beta subunit. This chain is Succinate--CoA ligase [ADP-forming] subunit alpha, found in Staphylococcus epidermidis (strain ATCC 12228 / FDA PCI 1200).